Reading from the N-terminus, the 176-residue chain is Ribosome rescue factor SmrB (176 aa).

In terms of domain architecture, Smr spans 93 to 168 (LDLHGYRQSE…GDAALLVLID (76 aa)).

It belongs to the SmrB family. In terms of assembly, associates with collided ribosomes, but not with correctly translating polysomes.

Acts as a ribosome collision sensor. Detects stalled/collided disomes (pairs of ribosomes where the leading ribosome is stalled and a second ribosome has collided with it) and endonucleolytically cleaves mRNA at the 5' boundary of the stalled ribosome. Stalled/collided disomes form a new interface (primarily via the 30S subunits) that binds SmrB. Cleaved mRNA becomes available for tmRNA ligation, leading to ribosomal subunit dissociation and rescue of stalled ribosomes. This Shewanella baltica (strain OS223) protein is Ribosome rescue factor SmrB.